The sequence spans 495 residues: Tyrosine 3-monooxygenase (495 aa).

Ser-19 bears the Phosphoserine; by CaMK2 mark. Ser-31 carries the phosphoserine modification. A Phosphoserine; by CaMK2 and PKA modification is found at Ser-40. A compositionally biased stretch (basic and acidic residues) spans 41-53; it reads LIEDARKEREKAE. The segment at 41-65 is disordered; the sequence is LIEDARKEREKAEAASAASSEPGDL. Residues His-328, His-333, and Glu-373 each contribute to the Fe cation site. Ser-469 carries the phosphoserine modification.

It belongs to the biopterin-dependent aromatic amino acid hydroxylase family. As to quaternary structure, homotetramer. Interacts (when phosphorylated at Ser-19) with YWHAG; one YWHAG dimer bounds to one TH tetramer this interaction may influence the phosphorylation and dephosphorylation of other sites. Fe(2+) is required as a cofactor. Phosphorylated on Ser-19, Ser-31 and Ser-40 by several protein kinases with different site specificities. Phosphorylation at Ser-31 and Ser-40 leads to an increase of TH activity. Phosphorylation at Ser-40 activates the enzyme and also counteracts the feedback inhibition of TH by catecholamines. Phosphorylation of Ser-19 and Ser-31 triggers the proteasomal degradation of TH through the ubiquitin-proteasome pathway. Phosphorylation at Ser-31 facilitates transport of TH from the soma to the nerve terminals via the microtubule network. Phosphorylation at Ser-19 induces the high-affinity binding to the 14-3-3 protein YWHAG; this interaction may influence the phosphorylation and dephosphorylation of other sites. Ser-19 increases the phosphorylation at Ser-40 in a hierarchical manner, leading to increased activity.

It is found in the cytoplasm. It localises to the perinuclear region. Its subcellular location is the nucleus. The protein localises to the cell projection. The protein resides in the axon. It is found in the cytoplasmic vesicle. It localises to the secretory vesicle. Its subcellular location is the synaptic vesicle. The catalysed reaction is (6R)-L-erythro-5,6,7,8-tetrahydrobiopterin + L-tyrosine + O2 = (4aS,6R)-4a-hydroxy-L-erythro-5,6,7,8-tetrahydrobiopterin + L-dopa. It participates in catecholamine biosynthesis; dopamine biosynthesis; dopamine from L-tyrosine: step 1/2. With respect to regulation, inhibited in feedback fashion by the catecholamine neurotransmitters, especially by dopamine in competition with tetrahydrobiopterin. Phosphorylation of several Ser/Thr residues in the N-terminus regulates the catalytic activity. Ser-31 and Ser-40 are readily phosphorylated to activate the catalytic activity. A Cysteine modification induced by N-ethylmaleimide (NEM), inhibits tyrosine 3-monooxygenase activity through the modification of the Cys-174. Functionally, catalyzes the conversion of L-tyrosine to L-dihydroxyphenylalanine (L-Dopa), the rate-limiting step in the biosynthesis of cathecolamines, dopamine, noradrenaline, and adrenaline. Uses tetrahydrobiopterin and molecular oxygen to convert tyrosine to L-Dopa. In addition to tyrosine, is able to catalyze the hydroxylation of phenylalanine and tryptophan with lower specificity. Positively regulates the regression of retinal hyaloid vessels during postnatal development. The chain is Tyrosine 3-monooxygenase (TH) from Canis lupus familiaris (Dog).